The following is a 979-amino-acid chain: Protocadherin alpha-9 (979 aa).

A signal peptide spans 1-59 (MRLGNRPEDIRTCVHLRWHIHGLLRQENASVVISKCLRHGAWRLLLWLLLLATWDVGSG). The Extracellular portion of the chain corresponds to 60–726 (QLHYSVPEEA…RREASLMDVN (667 aa)). Cadherin domains follow at residues 64–163 (SVPE…PPIF), 164–272 (SVAE…APVF), 273–380 (DRSV…APEI), 381–485 (VLTS…APAF), 486–595 (AHPE…PPTL), and 611–707 (VSRS…VPKA). N-linked (GlcNAc...) asparagine glycans are attached at residues N287 and N295. N578 is a glycosylation site (N-linked (GlcNAc...) asparagine). The chain crosses the membrane as a helical span at residues 727–747 (VYLIIAICAVSSLLVLTLLLY). The Cytoplasmic portion of the chain corresponds to 748–979 (TALRCSAVPM…GNSTTDNSDQ (232 aa)). PXXP repeat units follow at residues 763-766 (LGKP), 828-831 (PRQP), 861-864 (PGGP), 902-905 (PGNP), and 920-923 (PGSP). Residues 763–923 (LGKPTLVCSS…PDKFIIPGSP (161 aa)) form a 5 X 4 AA repeats of P-X-X-P region. The tract at residues 859–979 (AGPGGPDQQW…GNSTTDNSDQ (121 aa)) is disordered. Over residues 938–952 (DKSDFITFGKKEETK) the composition is skewed to basic and acidic residues.

It is found in the cell membrane. Functionally, potential calcium-dependent cell-adhesion protein. May be involved in the establishment and maintenance of specific neuronal connections in the brain. The sequence is that of Protocadherin alpha-9 from Mus musculus (Mouse).